Consider the following 376-residue polypeptide: Beta sliding clamp (376 aa).

Belongs to the beta sliding clamp family. Forms a ring-shaped head-to-tail homodimer around DNA which binds and tethers DNA polymerases and other proteins to the DNA. The DNA replisome complex has a single clamp-loading complex (3 tau and 1 each of delta, delta', psi and chi subunits) which binds 3 Pol III cores (1 core on the leading strand and 2 on the lagging strand) each with a beta sliding clamp dimer. Additional proteins in the replisome are other copies of gamma, psi and chi, Ssb, DNA helicase and RNA primase.

It localises to the cytoplasm. Confers DNA tethering and processivity to DNA polymerases and other proteins. Acts as a clamp, forming a ring around DNA (a reaction catalyzed by the clamp-loading complex) which diffuses in an ATP-independent manner freely and bidirectionally along dsDNA. Initially characterized for its ability to contact the catalytic subunit of DNA polymerase III (Pol III), a complex, multichain enzyme responsible for most of the replicative synthesis in bacteria; Pol III exhibits 3'-5' exonuclease proofreading activity. The beta chain is required for initiation of replication as well as for processivity of DNA replication. This Streptomyces coelicolor (strain ATCC BAA-471 / A3(2) / M145) protein is Beta sliding clamp (dnaN).